A 49-amino-acid chain; its full sequence is Large ribosomal subunit protein bL33B (49 aa).

The protein belongs to the bacterial ribosomal protein bL33 family.

The polypeptide is Large ribosomal subunit protein bL33B (Acholeplasma laidlawii (strain PG-8A)).